Reading from the N-terminus, the 230-residue chain is Cytidylate kinase (230 aa).

Position 11–19 (11–19 (GQSAAGKST)) interacts with ATP.

The protein belongs to the cytidylate kinase family. Type 1 subfamily.

The protein resides in the cytoplasm. It catalyses the reaction CMP + ATP = CDP + ADP. It carries out the reaction dCMP + ATP = dCDP + ADP. The sequence is that of Cytidylate kinase from Chloroflexus aggregans (strain MD-66 / DSM 9485).